A 369-amino-acid chain; its full sequence is MPSAIVAAEQYREIFLNQHPMMDVRAPIEFTRGAFPNSTNLPLMLDSEREKVGTCYKQFGQQAAIALGHSLVNGPIKQQRIEAWASYVKANPNAYLYCFRGGLRSQLTQQWLKEAGIEVPYIQGGYKAMRQYLIGVIEAAPTQQPLLSLSGMTGCGKTDFLLQRKEAVDLEGIANHRGSSFGKNIDPQPTQINFENQLAIALLRHQQDNHSCLLLEDESFLIGRSALPQSFYSAMQAAEILVLEEPDDTRLKRLRNEYVHKMYSGFCERLGLEAGFAAFSEYLLQSLMSIRKRLGGKQHQELQDLMQQALNQQISQNDTSLHLVWIHLLLHKYYDPMYQYQLQKKSERVLFKGSHQAMHEWLNNFKSTQ.

Positions 15-138 (FLNQHPMMDV…MRQYLIGVIE (124 aa)) constitute a Rhodanese domain. Cys98 (S-selanylcysteine intermediate) is an active-site residue.

It belongs to the SelU family. Monomer.

It catalyses the reaction 5-methylaminomethyl-2-thiouridine(34) in tRNA + selenophosphate + (2E)-geranyl diphosphate + H2O + H(+) = 5-methylaminomethyl-2-selenouridine(34) in tRNA + (2E)-thiogeraniol + phosphate + diphosphate. The enzyme catalyses 5-methylaminomethyl-2-thiouridine(34) in tRNA + (2E)-geranyl diphosphate = 5-methylaminomethyl-S-(2E)-geranyl-thiouridine(34) in tRNA + diphosphate. It carries out the reaction 5-methylaminomethyl-S-(2E)-geranyl-thiouridine(34) in tRNA + selenophosphate + H(+) = 5-methylaminomethyl-2-(Se-phospho)selenouridine(34) in tRNA + (2E)-thiogeraniol. The catalysed reaction is 5-methylaminomethyl-2-(Se-phospho)selenouridine(34) in tRNA + H2O = 5-methylaminomethyl-2-selenouridine(34) in tRNA + phosphate. Involved in the post-transcriptional modification of the uridine at the wobble position (U34) of tRNA(Lys), tRNA(Glu) and tRNA(Gln). Catalyzes the conversion of 2-thiouridine (S2U-RNA) to 2-selenouridine (Se2U-RNA). Acts in a two-step process involving geranylation of 2-thiouridine (S2U) to S-geranyl-2-thiouridine (geS2U) and subsequent selenation of the latter derivative to 2-selenouridine (Se2U) in the tRNA chain. This is tRNA 2-selenouridine synthase from Shewanella sp. (strain W3-18-1).